The primary structure comprises 178 residues: Transcription antitermination protein NusB (178 aa).

This sequence belongs to the NusB family.

Involved in transcription antitermination. Required for transcription of ribosomal RNA (rRNA) genes. Binds specifically to the boxA antiterminator sequence of the ribosomal RNA (rrn) operons. The sequence is that of Transcription antitermination protein NusB from Alkalilimnicola ehrlichii (strain ATCC BAA-1101 / DSM 17681 / MLHE-1).